A 70-amino-acid polypeptide reads, in one-letter code: Cold shock-like protein CspF (70 aa).

Residues 7-67 (GIVKTFDGKS…GLRGPSAANV (61 aa)) enclose the CSD domain.

It localises to the cytoplasm. This is Cold shock-like protein CspF (cspF) from Escherichia coli (strain K12).